A 371-amino-acid polypeptide reads, in one-letter code: Leucine-rich repeat-containing protein 2 (371 aa).

9 LRR repeats span residues 122–143 (HLREWYISNTLIQIIPTYIQLF), 145–166 (AMRILDLPKNQISHLPAEIGCL), 168–189 (NLKELNVGFNYLKSIPPELGDC), 191–214 (NLERLDCSGNLELMELPFELSNLK), 215–235 (QVTFVDISANKFSSVPICVLR), 238–260 (NLQWLDISSNNLTDLPQDIDRLE), 261–283 (ELQSFLLYKNKLTYLPYSMLNLK), 284–305 (KLTLLVVSGDHLVELPTALCDS), and 308–329 (PLKFVSLMDNPIDNAQCEDGNE).

In Homo sapiens (Human), this protein is Leucine-rich repeat-containing protein 2 (LRRC2).